A 200-amino-acid chain; its full sequence is High frequency lysogenization protein HflD homolog (200 aa).

Belongs to the HflD family.

The protein localises to the cytoplasm. It is found in the cell inner membrane. The sequence is that of High frequency lysogenization protein HflD homolog from Pseudoalteromonas translucida (strain TAC 125).